Reading from the N-terminus, the 1131-residue chain is Translation initiation factor IF-2 (1131 aa).

Residues 49–542 (KFKGSVSSNE…AFIMPKPQQS (494 aa)) are disordered. Residues 60-75 (KSIDNGKASRVEKPEK) are compositionally biased toward basic and acidic residues. Composition is skewed to polar residues over residues 76–88 (NNSVTAKADQTPS) and 108–125 (SEQNVTTGSTESEDNIQS). A compositionally biased stretch (basic and acidic residues) spans 127 to 138 (GDRKYQHTDRRP). The span at 139-152 (QGNNGEGPQTSTNS) shows a compositional bias: polar residues. Composition is skewed to basic and acidic residues over residues 164 to 180 (GDRRPQGQNSGDRRPYN) and 223 to 239 (GDRRPQGQNSGDRRPYN). Gly residues predominate over residues 411–436 (GQGGYGGRPQGQGSYGGRPQGQGGYA). Composition is skewed to basic and acidic residues over residues 450–479 (KDFDKDKDSGYTRSFDKKRTDPKSGEKSSI) and 487–530 (LTKE…DPNR). Residues 632–801 (KRPPVVCVMG…ILTAEMGELK (170 aa)) enclose the tr-type G domain. Positions 641-648 (GHVDHGKT) are G1. A GTP-binding site is contributed by 641-648 (GHVDHGKT). The segment at 666 to 670 (GITQH) is G2. The G3 stretch occupies residues 687–690 (DTPG). Residues 687-691 (DTPGH) and 741-744 (NKID) each bind GTP. Residues 741 to 744 (NKID) are G4. The interval 777-779 (SAH) is G5.

It belongs to the TRAFAC class translation factor GTPase superfamily. Classic translation factor GTPase family. IF-2 subfamily.

The protein resides in the cytoplasm. One of the essential components for the initiation of protein synthesis. Protects formylmethionyl-tRNA from spontaneous hydrolysis and promotes its binding to the 30S ribosomal subunits. Also involved in the hydrolysis of GTP during the formation of the 70S ribosomal complex. The polypeptide is Translation initiation factor IF-2 (Lachnoclostridium phytofermentans (strain ATCC 700394 / DSM 18823 / ISDg) (Clostridium phytofermentans)).